We begin with the raw amino-acid sequence, 107 residues long: Growth-regulated alpha protein (107 aa).

Residues Met-1–Gly-34 form the signal peptide. 2 disulfides stabilise this stretch: Cys-43-Cys-69 and Cys-45-Cys-85.

This sequence belongs to the intercrine alpha (chemokine CxC) family. N-terminal processed forms GRO-alpha(4-73), GRO-alpha(5-73) and GRO-alpha(6-73) are produced by proteolytic cleavage after secretion from peripheral blood monocytes.

It localises to the secreted. In terms of biological role, has chemotactic activity for neutrophils. May play a role in inflammation and exerts its effects on endothelial cells in an autocrine fashion. In vitro, the processed forms GRO-alpha(4-73), GRO-alpha(5-73) and GRO-alpha(6-73) show a 30-fold higher chemotactic activity. In Homo sapiens (Human), this protein is Growth-regulated alpha protein (CXCL1).